A 416-amino-acid chain; its full sequence is Thyroid hormone receptor alpha (416 aa).

Residues 1-13 are compositionally biased toward polar residues; sequence MEPMSNKQDSNSS. The interval 1-37 is disordered; the sequence is MEPMSNKQDSNSSEGDEKGWPDVPKRKRKNSQCSMKS. The interval 1 to 58 is modulating; that stretch reads MEPMSNKQDSNSSEGDEKGWPDVPKRKRKNSQCSMKSMSALSVSVPGYIPSYLEKDEP. Residues 15–24 are compositionally biased toward basic and acidic residues; sequence GDEKGWPDVP. Zn(2+) is bound by residues cysteine 59, cysteine 62, cysteine 76, cysteine 79, cysteine 97, cysteine 103, cysteine 113, and cysteine 116. 2 NR C4-type zinc fingers span residues 59–79 and 97–121; these read CVVC…CEGC and CKYE…FKKC. The segment at residues 59 to 133 is a DNA-binding region (nuclear receptor); the sequence is CVVCGDKATG…VGMAMDLVLD (75 aa). An NR LBD domain is found at 169–413; sequence AEWELIRMAT…PPLFLEVFED (245 aa). Arginine 234 lines the 3,3',5-triiodo-L-thyronine pocket.

Belongs to the nuclear hormone receptor family. NR1 subfamily.

It localises to the nucleus. In terms of biological role, nuclear hormone receptor that can act as a repressor or activator of transcription. High affinity receptor for thyroid hormones, including triiodothyronine and thyroxine. The chain is Thyroid hormone receptor alpha (thra) from Hippoglossus hippoglossus (Atlantic halibut).